A 346-amino-acid chain; its full sequence is Holliday junction branch migration complex subunit RuvB (346 aa).

A large ATPase domain (RuvB-L) region spans residues methionine 1–tyrosine 188. ATP contacts are provided by residues leucine 27, arginine 28, glycine 69, lysine 72, threonine 73, threonine 74, glutamate 135–phenylalanine 137, arginine 178, tyrosine 188, and arginine 225. Threonine 73 provides a ligand contact to Mg(2+). The interval proline 189–aspartate 259 is small ATPAse domain (RuvB-S). Residues arginine 262 to glycine 346 form a head domain (RuvB-H) region. The DNA site is built by arginine 298, arginine 317, and arginine 322.

It belongs to the RuvB family. In terms of assembly, homohexamer. Forms an RuvA(8)-RuvB(12)-Holliday junction (HJ) complex. HJ DNA is sandwiched between 2 RuvA tetramers; dsDNA enters through RuvA and exits via RuvB. An RuvB hexamer assembles on each DNA strand where it exits the tetramer. Each RuvB hexamer is contacted by two RuvA subunits (via domain III) on 2 adjacent RuvB subunits; this complex drives branch migration. In the full resolvosome a probable DNA-RuvA(4)-RuvB(12)-RuvC(2) complex forms which resolves the HJ.

It is found in the cytoplasm. The catalysed reaction is ATP + H2O = ADP + phosphate + H(+). Its function is as follows. The RuvA-RuvB-RuvC complex processes Holliday junction (HJ) DNA during genetic recombination and DNA repair, while the RuvA-RuvB complex plays an important role in the rescue of blocked DNA replication forks via replication fork reversal (RFR). RuvA specifically binds to HJ cruciform DNA, conferring on it an open structure. The RuvB hexamer acts as an ATP-dependent pump, pulling dsDNA into and through the RuvAB complex. RuvB forms 2 homohexamers on either side of HJ DNA bound by 1 or 2 RuvA tetramers; 4 subunits per hexamer contact DNA at a time. Coordinated motions by a converter formed by DNA-disengaged RuvB subunits stimulates ATP hydrolysis and nucleotide exchange. Immobilization of the converter enables RuvB to convert the ATP-contained energy into a lever motion, pulling 2 nucleotides of DNA out of the RuvA tetramer per ATP hydrolyzed, thus driving DNA branch migration. The RuvB motors rotate together with the DNA substrate, which together with the progressing nucleotide cycle form the mechanistic basis for DNA recombination by continuous HJ branch migration. Branch migration allows RuvC to scan DNA until it finds its consensus sequence, where it cleaves and resolves cruciform DNA. This is Holliday junction branch migration complex subunit RuvB from Halorhodospira halophila (strain DSM 244 / SL1) (Ectothiorhodospira halophila (strain DSM 244 / SL1)).